The following is a 318-amino-acid chain: Protoheme IX farnesyltransferase (318 aa).

Helical transmembrane passes span 29 to 49, 51 to 71, 102 to 122, 123 to 143, 151 to 171, 179 to 199, 219 to 239, 241 to 261, and 280 to 300; these read IIPLLLITTAGSMWIAAQGQV, PVLLLVTMAGGTLAAASAQTI, LIFAIALAVLSFTLLTVFANL, LAASLALSGIIFYVLIYTHWL, IVIGGAAGAIPALVGWAAVTG, LIFAIVFLWTPPHFWALALMI, ATVKQIWYYTLITVVATLLLV, PLHSSGIVYAAIAISLGAVFI, and LFLYSISYMMLLCLGMVIDSL.

Belongs to the UbiA prenyltransferase family. Protoheme IX farnesyltransferase subfamily.

It localises to the cell inner membrane. The catalysed reaction is heme b + (2E,6E)-farnesyl diphosphate + H2O = Fe(II)-heme o + diphosphate. It participates in porphyrin-containing compound metabolism; heme O biosynthesis; heme O from protoheme: step 1/1. Converts heme B (protoheme IX) to heme O by substitution of the vinyl group on carbon 2 of heme B porphyrin ring with a hydroxyethyl farnesyl side group. The chain is Protoheme IX farnesyltransferase from Trichormus variabilis (strain ATCC 29413 / PCC 7937) (Anabaena variabilis).